A 163-amino-acid polypeptide reads, in one-letter code: Urease accessory protein UreE (163 aa).

Positions 144-163 (QPEPGAYGGSSAGSHDGHHH) are disordered.

This sequence belongs to the UreE family.

It localises to the cytoplasm. Functionally, involved in urease metallocenter assembly. Binds nickel. Probably functions as a nickel donor during metallocenter assembly. This is Urease accessory protein UreE from Aliivibrio fischeri (strain MJ11) (Vibrio fischeri).